The sequence spans 263 residues: Alpha-tubulin N-acetyltransferase 2 (263 aa).

The N-acetyltransferase domain maps to 1-181 (MEIAFDLSTI…NKYALCSNFF (181 aa)). 115–128 (FFVVPTEQRSGNGF) provides a ligand contact to acetyl-CoA. Disordered regions lie at residues 191–223 (TPRQTKRASRASSAVSSHASSRNTSPIGRNRPR) and 242–263 (EVDPNSPTGLKNARDFGHRRIW). Residues 200-212 (RASSAVSSHASSR) are compositionally biased toward low complexity. The span at 253–263 (NARDFGHRRIW) shows a compositional bias: basic and acidic residues.

It belongs to the acetyltransferase ATAT1 family. Expressed in touch receptor neurons and in a subset of ciliated neurons, including PDE, ADE, CEP, and OLQ neurons.

It carries out the reaction L-lysyl-[alpha-tubulin] + acetyl-CoA = N(6)-acetyl-L-lysyl-[alpha-tubulin] + CoA + H(+). Specifically acetylates 'Lys-40' in alpha-tubulin/mec-12 on the lumenal side of microtubules. Promotes microtubule destabilization and accelerates microtubule dynamics; this activity may be independent of acetylation activity. Acetylates alpha-tubulin with a slow enzymatic rate, due to a catalytic site that is not optimized for acetyl transfer. Enters the microtubule through each end and diffuses quickly throughout the lumen of microtubules. Acetylates only long/old microtubules because of its slow acetylation rate since it does not have time to act on dynamically unstable microtubules before the enzyme is released. Required for the maintenance of touch receptor neurons and possibly other type of neurons involved in locomotion. This Caenorhabditis elegans protein is Alpha-tubulin N-acetyltransferase 2 (atat-2).